The primary structure comprises 624 residues: Adhesion and hyphal regulator 1 (624 aa).

Positions 19–46 form a DNA-binding region, zn(2)-C6 fungal-type; sequence CVTCRDRHIKCDEQQPVCKNCQKSNRKC. 2 disordered regions span residues 63 to 84 and 230 to 250; these read DDNK…YAFP and PQHH…TDPN. Residues 237–250 show a composition bias toward polar residues; the sequence is DTSQHQETTSTDPN.

As to quaternary structure, interacts with MCM1.

Its subcellular location is the nucleus. Transcription factor that binds the promoters of genes involved in biofilm formation, which include several key adhesion genes, and recruits MCM1 to these sites. Plays an important role in hyphal growth and virulence. Promotes conversion of opaque cells to white phase, but needs existence of EFG1, a key regulator required for maintenance of the white state. The polypeptide is Adhesion and hyphal regulator 1 (AHR1) (Candida albicans (strain SC5314 / ATCC MYA-2876) (Yeast)).